A 349-amino-acid polypeptide reads, in one-letter code: Anthranilate phosphoribosyltransferase (349 aa).

Residues G82, 85-86 (GD), 92-95 (NVST), 110-118 (KHGNRAVSG), and S122 contribute to the 5-phospho-alpha-D-ribose 1-diphosphate site. Anthranilate is bound at residue G82. S94 is a Mg(2+) binding site. N113 is a binding site for anthranilate. R168 is a binding site for anthranilate. The Mg(2+) site is built by D227 and E228.

This sequence belongs to the anthranilate phosphoribosyltransferase family. As to quaternary structure, homodimer. Mg(2+) serves as cofactor.

The enzyme catalyses N-(5-phospho-beta-D-ribosyl)anthranilate + diphosphate = 5-phospho-alpha-D-ribose 1-diphosphate + anthranilate. It functions in the pathway amino-acid biosynthesis; L-tryptophan biosynthesis; L-tryptophan from chorismate: step 2/5. In terms of biological role, catalyzes the transfer of the phosphoribosyl group of 5-phosphorylribose-1-pyrophosphate (PRPP) to anthranilate to yield N-(5'-phosphoribosyl)-anthranilate (PRA). This Pseudomonas putida (Arthrobacter siderocapsulatus) protein is Anthranilate phosphoribosyltransferase.